A 230-amino-acid polypeptide reads, in one-letter code: Response regulator MprA (230 aa).

Positions 4 to 118 (RILVVDDDRA…ELLARMRALL (115 aa)) constitute a Response regulatory domain. Aspartate 48 is subject to 4-aspartylphosphate. Residues 129–227 (SMAMRFSDLT…VRGVGYVLRE (99 aa)) constitute a DNA-binding region (ompR/PhoB-type).

In terms of assembly, monomer. Interaction with each conserved 8-bp repeat requires tandem binding by two protein monomers. Phosphorylated and dephosphorylated by MprB.

It localises to the cytoplasm. In terms of biological role, member of the two-component regulatory system MprB/MprA which contributes to maintaining a balance among several systems involved in stress resistance and is required for establishment and maintenance of persistent infection in the host. Functions as a transcriptional regulator that recognizes a 19-bp nucleotide motif comprizing two loosely conserved 8-bp direct DNA-binding motif repeats separated by a 3-bp spacer region. MprB/MprA up-regulates expression of mprA and pepD. This is Response regulator MprA (mprA) from Mycobacterium bovis (strain ATCC BAA-935 / AF2122/97).